The sequence spans 523 residues: Calcium-dependent protein kinase 28 (523 aa).

A lipid anchor (N-myristoyl glycine) is attached at Gly-2. Residue Cys-4 is the site of S-palmitoyl cysteine attachment. Residues 15-43 form a disordered region; the sequence is SSRRSSQTKSKAAPTPIDTKASTKRRTGS. The region spanning 62 to 322 is the Protein kinase domain; the sequence is YTIGKLLGHG…AAQALSHAWV (261 aa). ATP-binding positions include 68–76 and Lys-91; that span reads LGHGQFGYT. The active-site Proton acceptor is the Asp-188. 2 positions are modified to phosphoserine: Ser-228 and Ser-318. The segment at 328–358 is autoinhibitory domain; the sequence is ATDIPVDISVLNNLRQFVRYSRLKQFALRAL. EF-hand domains are found at residues 365–400, 402–437, 444–479, and 482–509; these read AEIS…DLPW, LKDS…VHQL, KWQL…RGSI, and LLDE…ASIS. 17 residues coordinate Ca(2+): Asp-378, Asp-380, Asn-382, Glu-389, Asp-415, Asn-417, Asp-419, Glu-426, Asp-457, Asp-459, Asp-461, Tyr-463, Glu-468, Asp-487, Asp-489, Asp-491, and Lys-493. The residue at position 495 (Ser-495) is a Phosphoserine. A Ca(2+)-binding site is contributed by Glu-498. A Phosphoserine modification is found at Ser-515.

The protein belongs to the protein kinase superfamily. Ser/Thr protein kinase family. CDPK subfamily. In terms of assembly, interacts with BIK1. As to expression, expressed in vascular and meristematic tissues throughout plant development.

Its subcellular location is the cell membrane. It carries out the reaction L-seryl-[protein] + ATP = O-phospho-L-seryl-[protein] + ADP + H(+). It catalyses the reaction L-threonyl-[protein] + ATP = O-phospho-L-threonyl-[protein] + ADP + H(+). With respect to regulation, activated by calcium. Autophosphorylation plays an important role in the regulation of the kinase activity. In terms of biological role, may play a role in signal transduction pathways that involve calcium as a second messenger. Acts as a developmentally controlled regulator for coordinated stem elongation and vascular development. Acts as a key component which contributes to the developmental switch that establishes the transition from vegetative to reproductive growth. Involved in pathogen-associated molecular pattern (PAMP)-triggered immunity (PTI) signaling. Interacts with and phosphorylates the kinase BIK1, a central rate-limiting kinase in PTI signaling. Facilitates BIK1 turnover and negatively regulates BIK1-mediated immune responses triggered by several PAMPs. Its kinase activity is necessary and sufficient for its function in PTI signaling. The polypeptide is Calcium-dependent protein kinase 28 (Arabidopsis thaliana (Mouse-ear cress)).